The chain runs to 406 residues: Arginine biosynthesis bifunctional protein ArgJ (406 aa).

Substrate is bound by residues T156, K182, T193, E279, N401, and T406. T193 (nucleophile) is an active-site residue.

Belongs to the ArgJ family. Heterotetramer of two alpha and two beta chains.

It is found in the cytoplasm. The enzyme catalyses N(2)-acetyl-L-ornithine + L-glutamate = N-acetyl-L-glutamate + L-ornithine. It catalyses the reaction L-glutamate + acetyl-CoA = N-acetyl-L-glutamate + CoA + H(+). Its pathway is amino-acid biosynthesis; L-arginine biosynthesis; L-ornithine and N-acetyl-L-glutamate from L-glutamate and N(2)-acetyl-L-ornithine (cyclic): step 1/1. The protein operates within amino-acid biosynthesis; L-arginine biosynthesis; N(2)-acetyl-L-ornithine from L-glutamate: step 1/4. With respect to regulation, feedback inhibition by L-arginine. In terms of biological role, catalyzes two activities which are involved in the cyclic version of arginine biosynthesis: the synthesis of N-acetylglutamate from glutamate and acetyl-CoA as the acetyl donor, and of ornithine by transacetylation between N(2)-acetylornithine and glutamate. This is Arginine biosynthesis bifunctional protein ArgJ from Bacillus amyloliquefaciens (Bacillus velezensis).